Reading from the N-terminus, the 1029-residue chain is Multidrug resistance protein MdtC (1029 aa).

Helical transmembrane passes span 15 to 35 (ILLS…LPVA), 333 to 353 (EVEQ…FLFL), 360 to 380 (LIPA…MYLC), 387 to 407 (LSLM…IVAL), 431 to 451 (VGFT…PLLL), 469 to 489 (VAIG…CGWL), 528 to 548 (LVGL…ISIP), 853 to 873 (VILI…LYES), 897 to 917 (AFDA…IGIV), 953 to 973 (PIMM…IASG), and 984 to 1004 (ITIV…TPVV).

It belongs to the resistance-nodulation-cell division (RND) (TC 2.A.6) family. MdtC subfamily. In terms of assembly, part of a tripartite efflux system composed of MdtA, MdtB and MdtC. MdtC forms a heteromultimer with MdtB.

The protein resides in the cell inner membrane. In Cronobacter sakazakii (strain ATCC BAA-894) (Enterobacter sakazakii), this protein is Multidrug resistance protein MdtC.